The chain runs to 348 residues: Elongation factor Ts (348 aa).

An involved in Mg(2+) ion dislocation from EF-Tu region spans residues 80–83 (TDFV).

Belongs to the EF-Ts family.

The protein resides in the cytoplasm. Associates with the EF-Tu.GDP complex and induces the exchange of GDP to GTP. It remains bound to the aminoacyl-tRNA.EF-Tu.GTP complex up to the GTP hydrolysis stage on the ribosome. The protein is Elongation factor Ts of Streptococcus mutans serotype c (strain ATCC 700610 / UA159).